Reading from the N-terminus, the 1275-residue chain is Serine/threonine-protein kinase ULK4 (1275 aa).

One can recognise a Protein kinase domain in the interval 4 to 280 (FILYEEIGRG…WTRLLQHSFW (277 aa)). Catalysis depends on D121, which acts as the Proton acceptor. 2 disordered regions span residues 299–346 (SRNT…EFRP) and 359–393 (FLLSSRPTPRTSTAVEVSPGEDRTHCSPQKTSPLT). Residues 336–346 (FRLENPTEFRP) are compositionally biased toward basic and acidic residues. Polar residues-rich tracts occupy residues 363-373 (SRPTPRTSTAV) and 384-393 (CSPQKTSPLT). HEAT repeat units follow at residues 727–765 (LIQEKDFVSTIIRLLESPSTYIRAKAFLVLLYILIYNRE), 842–880 (LKMCLPLMPIVLHLVTSQVFRPQVVTEEFLFSYGTILSH), 926–964 (STVVDYILPPLVSLVQSQNVEWRLFSLRLLSETTSLLVN), 1025–1063 (LVEESKLIPLIFEVTLEHQESILGNTMQSVIALLNNLVA), 1151–1189 (NRPLTDLISLLIPLLPNEDPEIFDVSSKCLSILVQLYGG), and 1213–1253 (PKEQ…LAPG).

This sequence belongs to the protein kinase superfamily. Ser/Thr protein kinase family. APG1/unc-51/ULK1 subfamily.

The catalysed reaction is L-seryl-[protein] + ATP = O-phospho-L-seryl-[protein] + ADP + H(+). It carries out the reaction L-threonyl-[protein] + ATP = O-phospho-L-threonyl-[protein] + ADP + H(+). Functionally, may be involved in the remodeling of cytoskeletal components, such as alpha-tubulin, and in this way regulates neurite branching and elongation, as well as cell motility. The chain is Serine/threonine-protein kinase ULK4 (ULK4) from Pongo abelii (Sumatran orangutan).